The primary structure comprises 148 residues: Deoxyuridine 5'-triphosphate nucleotidohydrolase (148 aa).

Substrate is bound by residues 68–70, N81, and 85–87; these read RSG and TID.

It belongs to the dUTPase family. Requires Mg(2+) as cofactor.

The catalysed reaction is dUTP + H2O = dUMP + diphosphate + H(+). Its pathway is pyrimidine metabolism; dUMP biosynthesis; dUMP from dCTP (dUTP route): step 2/2. In terms of biological role, this enzyme is involved in nucleotide metabolism: it produces dUMP, the immediate precursor of thymidine nucleotides and it decreases the intracellular concentration of dUTP so that uracil cannot be incorporated into DNA. This chain is Deoxyuridine 5'-triphosphate nucleotidohydrolase, found in Geobacter metallireducens (strain ATCC 53774 / DSM 7210 / GS-15).